The following is a 368-amino-acid chain: MSRSSLVDPSFELSDPCPDIHALFIQFDARFFGGSLACCEVKWSPRMYACAGICSYEIRGGRGGLCSIRLSKPLLTLRPRSDLVETLLHEMIHAYLFVKERNRDRDGHGPQFQAHMHRINQAGGTNITIYHSFHDEVRLYKQHWWRCSGPCRDRRPFFGYVKRSCNRAPGPNDRWWSQHQQSCGGNFLKVKEPEGYGQGKGSKRTNDKNKSGGPALKKTITPPRVTLDDFFKKDGKNSSDNSTSKSPTKPSTSLFTGSGQKLGGSSSTSSLLNSYPKATQNSGGNRLGGTSGGVSRLLPPVNFTSPSSAPVAEQVIDLGDSDDDDFQDMDDDALEISFVASDNSVICPSCNTEVMENLIHGHLDYCLG.

One can recognise a SprT-like domain in the interval 21-190; sequence HALFIQFDAR…QSCGGNFLKV (170 aa). Residue His-89 coordinates Zn(2+). Residue Glu-90 is part of the active site. Positions 93 and 108 each coordinate Zn(2+). Residues 187 to 309 are disordered; it reads FLKVKEPEGY…PVNFTSPSSA (123 aa). Over residues 226–237 the composition is skewed to basic and acidic residues; sequence TLDDFFKKDGKN. The span at 238 to 274 shows a compositional bias: low complexity; it reads SSDNSTSKSPTKPSTSLFTGSGQKLGGSSSTSSLLNS. The UBZ4-type zinc-finger motif lies at 344-368; it reads SVICPSCNTEVMENLIHGHLDYCLG. Positions 347, 350, 362, and 366 each coordinate Zn(2+).

This sequence belongs to the Spartan family. As to quaternary structure, interacts with vcp/p97 (cdc-48.1 or cdc-48.2).

It localises to the nucleus. The protein resides in the chromosome. Functionally, DNA-dependent metalloendopeptidase that mediates the proteolytic cleavage of covalent DNA-protein cross-links (DPCs) during DNA synthesis, thereby playing a key role in maintaining genomic integrity. DPCs are highly toxic DNA lesions that interfere with essential chromatin transactions, such as replication and transcription, and which are induced by reactive agents, such as UV light or formaldehyde. Associates with the DNA replication machinery and specifically removes DPCs during DNA synthesis. Regulator of UV-induced DNA damage response: required to protect genome stability during DNA replication, possibly via recruitment of vcp/p97 (cdc-48.1 or cdc-48.2) recruitment. The chain is DNA-dependent metalloprotease dvc-1 from Caenorhabditis elegans.